The following is a 112-amino-acid chain: Nitrogen regulatory protein P-II (112 aa).

O-UMP-tyrosine is present on Tyr51.

Belongs to the P(II) protein family. As to quaternary structure, homotrimer.

In nitrogen-limiting conditions, when the ratio of Gln to 2-ketoglutarate decreases, P-II is uridylylated to P-II-UMP. P-II-UMP allows the deadenylation of glutamine synthetase (GS), thus activating the enzyme. Conversely, in nitrogen excess P-II is deuridylated and promotes the adenylation of GS. P-II indirectly controls the transcription of the GS gene (glnA). P-II prevents NR-II-catalyzed conversion of NR-I to NR-I-phosphate, the transcriptional activator of glnA. When P-II is uridylylated to P-II-UMP, these events are reversed. The chain is Nitrogen regulatory protein P-II (glnB) from Rhizobium etli (strain ATCC 51251 / DSM 11541 / JCM 21823 / NBRC 15573 / CFN 42).